The primary structure comprises 834 residues: DNA-directed RNA polymerase subunit beta' (834 aa).

A compositionally biased stretch (polar residues) spans 1 to 22 (MTYSNKPTGSSLRSSRNSTLEP). The segment at 1-45 (MTYSNKPTGSSLRSSRNSTLEPQSLVHREESKRQEGPKGQNLRIG) is disordered. The span at 26–36 (VHREESKRQEG) shows a compositional bias: basic and acidic residues. Residues cysteine 101, cysteine 103, cysteine 118, and cysteine 121 each contribute to the Zn(2+) site. Mg(2+) is bound by residues aspartate 606, aspartate 608, and aspartate 610.

The protein belongs to the RNA polymerase beta' chain family. RpoC1 subfamily. As to quaternary structure, in plastids the minimal PEP RNA polymerase catalytic core is composed of four subunits: alpha, beta, beta', and beta''. When a (nuclear-encoded) sigma factor is associated with the core the holoenzyme is formed, which can initiate transcription. It depends on Mg(2+) as a cofactor. Zn(2+) is required as a cofactor.

The protein localises to the plastid. It is found in the chloroplast. The enzyme catalyses RNA(n) + a ribonucleoside 5'-triphosphate = RNA(n+1) + diphosphate. Functionally, DNA-dependent RNA polymerase catalyzes the transcription of DNA into RNA using the four ribonucleoside triphosphates as substrates. In Staurastrum punctulatum (Green alga), this protein is DNA-directed RNA polymerase subunit beta'.